The primary structure comprises 201 residues: Glycerol-3-phosphate acyltransferase (201 aa).

5 helical membrane passes run 5–25 (LLGALLVAAGYLAGSIPFGVV), 55–75 (KMGVLVLVLDAAKAIVPILVA), 87–107 (FWVTAVAVAAFVGHLFPVWLG), 118–138 (LGIFAVLAPWAALAGLVGYAV), and 164–184 (TYGPRHPVSWAGLAIALLIFV).

It belongs to the PlsY family. In terms of assembly, probably interacts with PlsX.

Its subcellular location is the cell inner membrane. The enzyme catalyses an acyl phosphate + sn-glycerol 3-phosphate = a 1-acyl-sn-glycero-3-phosphate + phosphate. It functions in the pathway lipid metabolism; phospholipid metabolism. In terms of biological role, catalyzes the transfer of an acyl group from acyl-phosphate (acyl-PO(4)) to glycerol-3-phosphate (G3P) to form lysophosphatidic acid (LPA). This enzyme utilizes acyl-phosphate as fatty acyl donor, but not acyl-CoA or acyl-ACP. In Anaeromyxobacter dehalogenans (strain 2CP-1 / ATCC BAA-258), this protein is Glycerol-3-phosphate acyltransferase.